A 436-amino-acid polypeptide reads, in one-letter code: Xylose isomerase (436 aa).

Catalysis depends on residues His-100 and Asp-103. Mg(2+) is bound by residues Glu-231, Glu-267, His-270, Asp-295, Asp-306, Asp-308, and Asp-338.

Belongs to the xylose isomerase family. Homotetramer. The cofactor is Mg(2+).

The protein localises to the cytoplasm. The catalysed reaction is alpha-D-xylose = alpha-D-xylulofuranose. The chain is Xylose isomerase from Ruegeria sp. (strain TM1040) (Silicibacter sp.).